A 1242-amino-acid chain; its full sequence is DNA-directed RNA polymerase RPB2 homolog (1242 aa).

A C4-type zinc finger spans residues 1180–1201 (CRNCGEPAIYNASHPIYKCMNC).

Belongs to the RNA polymerase beta chain family. Part of the viral DNA-directed RNA polymerase that consists of 8 polII-like subunits (RPB1, RPB2, RPB3, RPB5, RPB6, RPB7, RPB9, RPB10), a capping enzyme and a termination factor.

The protein localises to the host cytoplasm. It is found in the virion. It carries out the reaction RNA(n) + a ribonucleoside 5'-triphosphate = RNA(n+1) + diphosphate. Its function is as follows. Catalytic component of the DNA-directed RNA polymerase (RNAP) that catalyzes the transcription in the cytoplasm of viral DNA into RNA using the four ribonucleoside triphosphates as substrates. Forms the polymerase active center together with RPB1. Part of the core element with the central large cleft, the clamp element that moves to open and close the cleft and the jaws that are thought to grab the incoming DNA template. This chain is DNA-directed RNA polymerase RPB2 homolog, found in African swine fever virus (isolate Pig/Kenya/KEN-50/1950) (ASFV).